Here is a 189-residue protein sequence, read N- to C-terminus: MVKVIASSVRKGNVLDVDGKLYVVLTAQNFHPGKGTPVTQVDMRRISDGVKVSERYRTTEQVERAFVEDREHTFLYEDGEGFHFMNPETYDQLVMSTEDIGDLKAYLQEGMAVMLSIHEGLAIAIDLPRHVTLEIVETEPVVKGQTASSSYKPAVLSNGVRTLVPPHIQAGTRVVIATEDGSYVERAKD.

The protein belongs to the elongation factor P family.

The protein resides in the cytoplasm. The protein operates within protein biosynthesis; polypeptide chain elongation. Involved in peptide bond synthesis. Stimulates efficient translation and peptide-bond synthesis on native or reconstituted 70S ribosomes in vitro. Probably functions indirectly by altering the affinity of the ribosome for aminoacyl-tRNA, thus increasing their reactivity as acceptors for peptidyl transferase. In Sinorhizobium medicae (strain WSM419) (Ensifer medicae), this protein is Elongation factor P.